Here is a 688-residue protein sequence, read N- to C-terminus: Polyribonucleotide nucleotidyltransferase (688 aa).

The Mg(2+) site is built by Asp-484 and Asp-490. Residues 550-609 form the KH domain; the sequence is PQTEIFNVAPDKIIEIIGQGGRVIKEIVEKFEVKIDLNTPSGEVKIMGNKERVLKTKEFI. In terms of domain architecture, S1 motif spans 626–688; the sequence is DEVLEAQVKR…NKGKIALDLA (63 aa).

Belongs to the polyribonucleotide nucleotidyltransferase family. Mg(2+) is required as a cofactor.

It is found in the cytoplasm. The catalysed reaction is RNA(n+1) + phosphate = RNA(n) + a ribonucleoside 5'-diphosphate. In terms of biological role, involved in mRNA degradation. Catalyzes the phosphorolysis of single-stranded polyribonucleotides processively in the 3'- to 5'-direction. The sequence is that of Polyribonucleotide nucleotidyltransferase from Helicobacter pylori (strain J99 / ATCC 700824) (Campylobacter pylori J99).